Here is a 176-residue protein sequence, read N- to C-terminus: 3-hydroxyanthranilate 3,4-dioxygenase (176 aa).

Arg44 contributes to the O2 binding site. The Fe cation site is built by His48, Glu54, and His92. Position 54 (Glu54) interacts with substrate. 2 residues coordinate substrate: Arg96 and Glu106. The Fe cation site is built by Cys121, Cys124, Cys158, and Cys161.

It belongs to the 3-HAO family. In terms of assembly, homodimer. The cofactor is Fe(2+).

It catalyses the reaction 3-hydroxyanthranilate + O2 = (2Z,4Z)-2-amino-3-carboxymuconate 6-semialdehyde. Its pathway is cofactor biosynthesis; NAD(+) biosynthesis; quinolinate from L-kynurenine: step 3/3. In terms of biological role, catalyzes the oxidative ring opening of 3-hydroxyanthranilate to 2-amino-3-carboxymuconate semialdehyde, which spontaneously cyclizes to quinolinate. The sequence is that of 3-hydroxyanthranilate 3,4-dioxygenase from Xanthomonas euvesicatoria pv. vesicatoria (strain 85-10) (Xanthomonas campestris pv. vesicatoria).